Consider the following 524-residue polypeptide: Probable myosin-binding protein 5 (524 aa).

The chain crosses the membrane as a helical span at residues 20–40; the sequence is FLIYALLEWILIIILFIDGFL. The GTD-binding domain maps to 299 to 397; the sequence is SILQHLNRQV…ELEAGIEVYR (99 aa). Residues 462 to 490 are a coiled coil; it reads SRKDMLVKEISEITERLNAIESKGELLQQ.

It is found in the membrane. Its function is as follows. Probable membrane-anchored myosin receptors. This is Probable myosin-binding protein 5 from Arabidopsis thaliana (Mouse-ear cress).